The primary structure comprises 112 residues: Nucleoid-associated protein FTW_0607 (112 aa).

A disordered region spans residues 1–27 (MNFDMSKLMQQAQKMQEQMKKAQQERE). Over residues 17 to 27 (EQMKKAQQERE) the composition is skewed to basic and acidic residues.

The protein belongs to the YbaB/EbfC family. In terms of assembly, homodimer.

The protein localises to the cytoplasm. It is found in the nucleoid. Binds to DNA and alters its conformation. May be involved in regulation of gene expression, nucleoid organization and DNA protection. The sequence is that of Nucleoid-associated protein FTW_0607 from Francisella tularensis subsp. tularensis (strain WY96-3418).